Reading from the N-terminus, the 152-residue chain is Deoxyuridine 5'-triphosphate nucleotidohydrolase (152 aa).

Substrate is bound by residues 71 to 73 (RSG), N84, 88 to 90 (LID), and M98.

Belongs to the dUTPase family. Mg(2+) serves as cofactor.

It carries out the reaction dUTP + H2O = dUMP + diphosphate + H(+). It functions in the pathway pyrimidine metabolism; dUMP biosynthesis; dUMP from dCTP (dUTP route): step 2/2. Its function is as follows. This enzyme is involved in nucleotide metabolism: it produces dUMP, the immediate precursor of thymidine nucleotides and it decreases the intracellular concentration of dUTP so that uracil cannot be incorporated into DNA. The sequence is that of Deoxyuridine 5'-triphosphate nucleotidohydrolase from Shewanella sp. (strain ANA-3).